The following is a 454-amino-acid chain: Bifunctional protein GlmU (454 aa).

Positions 1–227 (MTQLSVVILA…FMEVEGANNR (227 aa)) are pyrophosphorylase. UDP-N-acetyl-alpha-D-glucosamine contacts are provided by residues 9 to 12 (LAAG), Lys23, Gln74, 79 to 80 (GT), 101 to 103 (YGD), Gly138, Glu152, Asn167, and Asn225. Mg(2+) is bound at residue Asp103. Asn225 lines the Mg(2+) pocket. Positions 228–248 (LQLAALERFYQKTQAEKLLLA) are linker. The tract at residues 249–454 (GVRLIDPARF…QGWQRPTKKK (206 aa)) is N-acetyltransferase. Positions 331 and 349 each coordinate UDP-N-acetyl-alpha-D-glucosamine. The active-site Proton acceptor is His361. Residues Tyr364 and Asn375 each contribute to the UDP-N-acetyl-alpha-D-glucosamine site. Acetyl-CoA is bound by residues Ala378, 384–385 (NY), Ser403, Ala421, and Arg438.

This sequence in the N-terminal section; belongs to the N-acetylglucosamine-1-phosphate uridyltransferase family. It in the C-terminal section; belongs to the transferase hexapeptide repeat family. As to quaternary structure, homotrimer. Mg(2+) is required as a cofactor.

It is found in the cytoplasm. It catalyses the reaction alpha-D-glucosamine 1-phosphate + acetyl-CoA = N-acetyl-alpha-D-glucosamine 1-phosphate + CoA + H(+). It carries out the reaction N-acetyl-alpha-D-glucosamine 1-phosphate + UTP + H(+) = UDP-N-acetyl-alpha-D-glucosamine + diphosphate. It participates in nucleotide-sugar biosynthesis; UDP-N-acetyl-alpha-D-glucosamine biosynthesis; N-acetyl-alpha-D-glucosamine 1-phosphate from alpha-D-glucosamine 6-phosphate (route II): step 2/2. It functions in the pathway nucleotide-sugar biosynthesis; UDP-N-acetyl-alpha-D-glucosamine biosynthesis; UDP-N-acetyl-alpha-D-glucosamine from N-acetyl-alpha-D-glucosamine 1-phosphate: step 1/1. The protein operates within bacterial outer membrane biogenesis; LPS lipid A biosynthesis. Functionally, catalyzes the last two sequential reactions in the de novo biosynthetic pathway for UDP-N-acetylglucosamine (UDP-GlcNAc). The C-terminal domain catalyzes the transfer of acetyl group from acetyl coenzyme A to glucosamine-1-phosphate (GlcN-1-P) to produce N-acetylglucosamine-1-phosphate (GlcNAc-1-P), which is converted into UDP-GlcNAc by the transfer of uridine 5-monophosphate (from uridine 5-triphosphate), a reaction catalyzed by the N-terminal domain. The polypeptide is Bifunctional protein GlmU (Actinobacillus pleuropneumoniae serotype 3 (strain JL03)).